Reading from the N-terminus, the 160-residue chain is Ureidoglycolate lyase (160 aa).

Belongs to the ureidoglycolate lyase family. Homodimer. It depends on Ni(2+) as a cofactor.

It catalyses the reaction (S)-ureidoglycolate = urea + glyoxylate. The protein operates within nitrogen metabolism; (S)-allantoin degradation. Catalyzes the catabolism of the allantoin degradation intermediate (S)-ureidoglycolate, generating urea and glyoxylate. Involved in the utilization of allantoin as nitrogen source. This is Ureidoglycolate lyase from Salmonella enteritidis.